A 524-amino-acid chain; its full sequence is Cytochrome P450 4F3 (524 aa).

Residues 15–35 traverse the membrane as a helical segment; that stretch reads AASPWLLLLLVGASCLLAYIL. A heme-binding site is contributed by C468.

Belongs to the cytochrome P450 family. Requires heme as cofactor.

The protein resides in the endoplasmic reticulum membrane. It localises to the microsome membrane. It carries out the reaction leukotriene B4 + reduced [NADPH--hemoprotein reductase] + O2 = 18-hydroxy-leukotriene B4 + oxidized [NADPH--hemoprotein reductase] + H2O + H(+). It catalyses the reaction leukotriene B4 + reduced [NADPH--hemoprotein reductase] + O2 = 19-hydroxy-leukotriene B4 + oxidized [NADPH--hemoprotein reductase] + H2O + H(+). Its pathway is lipid metabolism; leukotriene B4 degradation. A cytochrome P450 monooxygenase involved in the metabolism of the pro-inflammatory lipid mediator leukotriene B4 (LTB4). Hydroxylates at the omega-1 and omega-2 positions LTB4. This oxidation step leads to LTB4 inactivation, which is postulated to be a crucial part of the resolution of inflammation. Mechanistically, uses molecular oxygen inserting one oxygen atom into a substrate, and reducing the second into a water molecule, with two electrons provided by NADPH via cytochrome P450 reductase (CPR; NADPH-ferrihemoprotein reductase). The sequence is that of Cytochrome P450 4F3 from Rattus norvegicus (Rat).